Consider the following 333-residue polypeptide: Holliday junction branch migration complex subunit RuvB (333 aa).

The large ATPase domain (RuvB-L) stretch occupies residues 1-182 (MDERLLSQSH…FGVTLKLEYY (182 aa)). ATP is bound by residues L21, R22, G63, K66, T67, T68, 129–131 (EDY), R172, Y182, and R219. T67 contacts Mg(2+). The interval 183 to 253 (ETHELAAIVS…LASDALDRLH (71 aa)) is small ATPAse domain (RuvB-S). The segment at 256-333 (ALGLDEVDHR…SHFGYEEEEE (78 aa)) is head domain (RuvB-H). The DNA site is built by R311 and R316.

This sequence belongs to the RuvB family. As to quaternary structure, homohexamer. Forms an RuvA(8)-RuvB(12)-Holliday junction (HJ) complex. HJ DNA is sandwiched between 2 RuvA tetramers; dsDNA enters through RuvA and exits via RuvB. An RuvB hexamer assembles on each DNA strand where it exits the tetramer. Each RuvB hexamer is contacted by two RuvA subunits (via domain III) on 2 adjacent RuvB subunits; this complex drives branch migration. In the full resolvosome a probable DNA-RuvA(4)-RuvB(12)-RuvC(2) complex forms which resolves the HJ.

The protein localises to the cytoplasm. It catalyses the reaction ATP + H2O = ADP + phosphate + H(+). The RuvA-RuvB-RuvC complex processes Holliday junction (HJ) DNA during genetic recombination and DNA repair, while the RuvA-RuvB complex plays an important role in the rescue of blocked DNA replication forks via replication fork reversal (RFR). RuvA specifically binds to HJ cruciform DNA, conferring on it an open structure. The RuvB hexamer acts as an ATP-dependent pump, pulling dsDNA into and through the RuvAB complex. RuvB forms 2 homohexamers on either side of HJ DNA bound by 1 or 2 RuvA tetramers; 4 subunits per hexamer contact DNA at a time. Coordinated motions by a converter formed by DNA-disengaged RuvB subunits stimulates ATP hydrolysis and nucleotide exchange. Immobilization of the converter enables RuvB to convert the ATP-contained energy into a lever motion, pulling 2 nucleotides of DNA out of the RuvA tetramer per ATP hydrolyzed, thus driving DNA branch migration. The RuvB motors rotate together with the DNA substrate, which together with the progressing nucleotide cycle form the mechanistic basis for DNA recombination by continuous HJ branch migration. Branch migration allows RuvC to scan DNA until it finds its consensus sequence, where it cleaves and resolves cruciform DNA. The protein is Holliday junction branch migration complex subunit RuvB of Exiguobacterium sp. (strain ATCC BAA-1283 / AT1b).